We begin with the raw amino-acid sequence, 626 residues long: DNA-directed RNA polymerase subunit gamma (626 aa).

Zn(2+) is bound by residues C71, C73, C86, and C89. Residues D467, D469, and D471 each coordinate Mg(2+).

The protein belongs to the RNA polymerase beta' chain family. RpoC1 subfamily. In terms of assembly, in cyanobacteria the RNAP catalytic core is composed of 2 alpha, 1 beta, 1 beta', 1 gamma and 1 omega subunit. When a sigma factor is associated with the core the holoenzyme is formed, which can initiate transcription. The cofactor is Mg(2+). Zn(2+) is required as a cofactor.

It catalyses the reaction RNA(n) + a ribonucleoside 5'-triphosphate = RNA(n+1) + diphosphate. In terms of biological role, DNA-dependent RNA polymerase catalyzes the transcription of DNA into RNA using the four ribonucleoside triphosphates as substrates. This chain is DNA-directed RNA polymerase subunit gamma, found in Synechocystis sp. (strain ATCC 27184 / PCC 6803 / Kazusa).